The chain runs to 484 residues: Transcription factor MYB88 (484 aa).

The disordered stretch occupies residues M1–S20. A Nuclear localization signal motif is present at residues K13–S20. HTH myb-type domains follow at residues K25 to L76 and N77 to A131. DNA-binding regions (H-T-H motif) lie at residues W53–L76 and W104–C127. 3 disordered regions span residues N215–N241, R321–L383, and G458–L484. Residues K232 to N241 are compositionally biased toward basic and acidic residues. Positions S339–G348 are enriched in low complexity. A compositionally biased stretch (polar residues) spans T354–G380. Residues S463–C476 are compositionally biased toward pro residues.

As to quaternary structure, interacts with RBR1. As to expression, expressed at low levels in all organs including roots, leaves, hypocotyls stems, flowers, siliques and buds.

It is found in the nucleus. Functionally, transcription factor that binds to DNA in promoters cis-regulatory element 5'-GGCGCGC-3' of cell cycle genes, including cyclins, cyclin-dependent kinases (CDKs), and components of the pre-replication complex. Binds to DNA in promoters cis-regulatory element 5'-AGCCG-3' of auxin regulated genes (e.g. PIN3 and PIN7). Together with FAMA and MYB124, ensures that stomata contain just two guard cells (GCs) by enforcing a single symmetric precursor cell division before stomatal maturity. Represses the expression of the mitosis-inducing factors CDKB1-1 and CDKA-1, specifically required for the last guard mother cells (GMC) symmetric divisions in the stomatal pathway. Represses CYCA2-3 in newly formed guard cells. Together with MYB88, regulates stomata spacing by restricting divisions late in the stomatal cell lineage thus limiting the number of GMC divisions. In collaboration with CDKB1-1 and CDKB1-2, restrict the G1/S transition and chloroplast and nuclear number during stomatal formation, and normally maintain fate and developmental progression throughout the stomatal cell lineage. Involved in sensing and/or transducing abiotic stress (e.g. drought and salt), probably via the positive regulation of NAC019. Regulates female reproduction being required for entry into megasporogenesis, probably via the regulation of cell cycle genes. Plays a minor role in lateral roots (LRs) initiation. Involved complementarily in establishing the gravitropic set-point angles of lateral roots by regulating the transcription of PIN3 and PIN7 in gravity-sensing cells of primary and lateral roots. This Arabidopsis thaliana (Mouse-ear cress) protein is Transcription factor MYB88.